An 86-amino-acid chain; its full sequence is Neurotoxin LmNaTx17 (86 aa).

The first 18 residues, 1-18 (MKILFVIVLAAFFIGVHC), serve as a signal peptide directing secretion. The 67-residue stretch at 19–85 (KHGYPVQYSG…TWDYKTGKCR (67 aa)) folds into the LCN-type CS-alpha/beta domain. Cystine bridges form between cysteine 33–cysteine 84, cysteine 37–cysteine 58, cysteine 44–cysteine 65, and cysteine 48–cysteine 67.

Belongs to the long (4 C-C) scorpion toxin superfamily. Sodium channel inhibitor family. Beta subfamily. As to expression, expressed by the venom gland.

Its subcellular location is the secreted. Binds voltage-independently at site-4 of sodium channels (Nav) and shift the voltage of activation toward more negative potentials thereby affecting sodium channel activation and promoting spontaneous and repetitive firing. The polypeptide is Neurotoxin LmNaTx17 (Lychas mucronatus (Chinese swimming scorpion)).